Here is a 436-residue protein sequence, read N- to C-terminus: MQVSVENTSALERRMTIGVPAERIETEVNKRLQQTARKAKIPGFRPGKVPMSVIRQRYEDGARQEALGDLIQATFYEAVVEQKLNPAGAPAVEPKSFEKGKDLEYVATFEVFPEFTVAGFDTIAVERLSADVVDSDLDNMLEVLRKQNVRFEVADRAAQNEDQLNIDFVGKVDGEVFAGGSATATQLVLGSGRMIPGFEDGLVGAKAGEERVLNVTFPEDYQNLELAGKAAEFTVTVNTVSEPKLPELNEEFFKQFGIKETGIEGFRTEVRKNMERELRQAIKSKVKNQVMDGLLAANPIEVPKALLENEVNRLRVQAVQQFGGNIKPDQLPAELFEEQAKRRVELGLIVAEVVKQFDLKPDDARVREMIQEMASAYQEPEQVVAWYYKNEQQMNEVRSVVLEEQVVDTVLQKASVTDKSVSYEEAVKPVEAPKAD.

The PPIase FKBP-type domain maps to 161 to 246 (EDQLNIDFVG…VNTVSEPKLP (86 aa)).

It belongs to the FKBP-type PPIase family. Tig subfamily.

The protein resides in the cytoplasm. The catalysed reaction is [protein]-peptidylproline (omega=180) = [protein]-peptidylproline (omega=0). Involved in protein export. Acts as a chaperone by maintaining the newly synthesized protein in an open conformation. Functions as a peptidyl-prolyl cis-trans isomerase. The sequence is that of Trigger factor from Pseudomonas savastanoi pv. phaseolicola (strain 1448A / Race 6) (Pseudomonas syringae pv. phaseolicola (strain 1448A / Race 6)).